Reading from the N-terminus, the 261-residue chain is Cytochrome c oxidase subunit 3 (261 aa).

The Mitochondrial matrix portion of the chain corresponds to Met-1 to Pro-15. Residues Trp-16 to Trp-34 form a helical membrane-spanning segment. Residues Phe-35–Val-40 are Mitochondrial intermembrane-facing. A helical transmembrane segment spans residues Thr-41–Thr-66. The Mitochondrial matrix segment spans residues Phe-67–Thr-72. The helical transmembrane segment at Pro-73–Ser-105 threads the bilayer. Residues Leu-106–Glu-128 are Mitochondrial intermembrane-facing. Residues Val-129–Met-152 traverse the membrane as a helical segment. Over Glu-153–Ala-155 the chain is Mitochondrial matrix. The chain crosses the membrane as a helical span at residues Arg-156 to Glu-183. The Mitochondrial intermembrane segment spans residues Ala-184–Asp-190. A helical transmembrane segment spans residues Gly-191–Ile-223. The Mitochondrial matrix portion of the chain corresponds to Gln-224–His-232. A helical transmembrane segment spans residues Phe-233–Ile-256. The Mitochondrial intermembrane portion of the chain corresponds to Tyr-257–Ser-261.

Belongs to the cytochrome c oxidase subunit 3 family. As to quaternary structure, component of the cytochrome c oxidase (complex IV, CIV), a multisubunit enzyme composed of 14 subunits. The complex is composed of a catalytic core of 3 subunits MT-CO1, MT-CO2 and MT-CO3, encoded in the mitochondrial DNA, and 11 supernumerary subunits COX4I, COX5A, COX5B, COX6A, COX6B, COX6C, COX7A, COX7B, COX7C, COX8 and NDUFA4, which are encoded in the nuclear genome. The complex exists as a monomer or a dimer and forms supercomplexes (SCs) in the inner mitochondrial membrane with NADH-ubiquinone oxidoreductase (complex I, CI) and ubiquinol-cytochrome c oxidoreductase (cytochrome b-c1 complex, complex III, CIII), resulting in different assemblies (supercomplex SCI(1)III(2)IV(1) and megacomplex MCI(2)III(2)IV(2)).

The protein localises to the mitochondrion inner membrane. The enzyme catalyses 4 Fe(II)-[cytochrome c] + O2 + 8 H(+)(in) = 4 Fe(III)-[cytochrome c] + 2 H2O + 4 H(+)(out). Its function is as follows. Component of the cytochrome c oxidase, the last enzyme in the mitochondrial electron transport chain which drives oxidative phosphorylation. The respiratory chain contains 3 multisubunit complexes succinate dehydrogenase (complex II, CII), ubiquinol-cytochrome c oxidoreductase (cytochrome b-c1 complex, complex III, CIII) and cytochrome c oxidase (complex IV, CIV), that cooperate to transfer electrons derived from NADH and succinate to molecular oxygen, creating an electrochemical gradient over the inner membrane that drives transmembrane transport and the ATP synthase. Cytochrome c oxidase is the component of the respiratory chain that catalyzes the reduction of oxygen to water. Electrons originating from reduced cytochrome c in the intermembrane space (IMS) are transferred via the dinuclear copper A center (CU(A)) of subunit 2 and heme A of subunit 1 to the active site in subunit 1, a binuclear center (BNC) formed by heme A3 and copper B (CU(B)). The BNC reduces molecular oxygen to 2 water molecules using 4 electrons from cytochrome c in the IMS and 4 protons from the mitochondrial matrix. In Formosania lacustris (Oriental stream loach), this protein is Cytochrome c oxidase subunit 3 (mt-co3).